A 146-amino-acid polypeptide reads, in one-letter code: Large ribosomal subunit protein uL22 (146 aa).

The segment at 1–39 is disordered; sequence MAETQTTTPKKKAERRAPPPARARKNRPAAPAPGPHASL.

This sequence belongs to the universal ribosomal protein uL22 family. Part of the 50S ribosomal subunit.

Its function is as follows. This protein binds specifically to 23S rRNA; its binding is stimulated by other ribosomal proteins, e.g. L4, L17, and L20. It is important during the early stages of 50S assembly. It makes multiple contacts with different domains of the 23S rRNA in the assembled 50S subunit and ribosome. Functionally, the globular domain of the protein is located near the polypeptide exit tunnel on the outside of the subunit, while an extended beta-hairpin is found that lines the wall of the exit tunnel in the center of the 70S ribosome. This Anaeromyxobacter dehalogenans (strain 2CP-1 / ATCC BAA-258) protein is Large ribosomal subunit protein uL22.